Consider the following 400-residue polypeptide: Enoyl-[acyl-carrier-protein] reductase [NADH] (400 aa).

NAD(+)-binding positions include 48 to 53 (GASTGY), 74 to 75 (FE), 111 to 112 (DA), and 139 to 140 (LA). Residue Y225 coordinates substrate. Y235 acts as the Proton donor in catalysis. NAD(+) contacts are provided by residues K244 and 273–275 (VVT).

It belongs to the TER reductase family. Monomer.

The catalysed reaction is a 2,3-saturated acyl-[ACP] + NAD(+) = a (2E)-enoyl-[ACP] + NADH + H(+). The protein operates within lipid metabolism; fatty acid biosynthesis. Its function is as follows. Involved in the final reduction of the elongation cycle of fatty acid synthesis (FAS II). Catalyzes the reduction of a carbon-carbon double bond in an enoyl moiety that is covalently linked to an acyl carrier protein (ACP). The sequence is that of Enoyl-[acyl-carrier-protein] reductase [NADH] from Burkholderia lata (strain ATCC 17760 / DSM 23089 / LMG 22485 / NCIMB 9086 / R18194 / 383).